Reading from the N-terminus, the 335-residue chain is Serpentine receptor class gamma-11 (335 aa).

7 helical membrane-spanning segments follow: residues 33-53 (FLQI…LYTI), 66-86 (FFLI…LDII), 98-118 (PIIA…MIVL), 154-174 (LKYL…NLII), 202-222 (FQLI…SVIF), 242-262 (GTAY…LFAF), and 271-291 (TIFG…PIIM).

This sequence belongs to the nematode receptor-like protein srg family.

The protein resides in the membrane. This Caenorhabditis elegans protein is Serpentine receptor class gamma-11 (srg-11).